The following is a 184-amino-acid chain: Large ribosomal subunit protein uL15 (184 aa).

Residues 1 to 45 form a disordered region; it reads MDLSSLRPAKGAVKNKKRVGRGQGSGNGTTAGKGNNGQQSRSGYK. The span at 21-35 shows a compositional bias: gly residues; sequence RGQGSGNGTTAGKGN.

This sequence belongs to the universal ribosomal protein uL15 family. Part of the 50S ribosomal subunit.

Functionally, binds to the 23S rRNA. The chain is Large ribosomal subunit protein uL15 from Pelodictyon phaeoclathratiforme (strain DSM 5477 / BU-1).